The following is a 261-amino-acid chain: Esterase citA (261 aa).

Residues Ser122, Asp207, and His235 each act as charge relay system in the active site.

The protein belongs to the LovG family.

The protein operates within mycotoxin biosynthesis. Its function is as follows. Non-reducing polyketide synthase; part of the gene cluster that mediates the biosynthesis of the mycotoxin citrinin, a hepato-nephrotoxic compound to humans due to inhibition of respiration complex III. The pathway begins with the synthesis of a keto-aldehyde intermediate by the citrinin PKS (pksCT also named citS) from successive condensations of 4 malonyl-CoA units, presumably with a simple acetyl-CoA starter unit. Release of the keto-aldehyde intermediate is consistent with the presence of the C-terminal reductive release domain. CitA collaborates with citS by catalyzing the hydrolysis of ACP-bound acyl intermediates to free the ACP from stalled intermediates. CitB then catalyzes the oxidation of the C-12 methyl of the ketone intermediate to an alcohol intermediate which is further oxidized by the oxidoreductase citC to produce a bisaldehyde intermediate. The fourth catalytic step is catalyzed by the citD aldehyde dehydrogenase. The final transformation is the reduction of C-3 by citE to provide the chemically stable citrinin nucleus. CitE appears highly selective for its substrate as its presence in any context other than a full complement of citS and citA-D does not result in observable new compounds. This chain is Esterase citA, found in Monascus ruber (Mold).